The chain runs to 308 residues: Putative transposon Ty5-1 protein YCL074W (308 aa).

The chain is Putative transposon Ty5-1 protein YCL074W (TY5A) from Saccharomyces cerevisiae (strain ATCC 204508 / S288c) (Baker's yeast).